A 469-amino-acid chain; its full sequence is Putative dipeptidase MW1694 (469 aa).

Position 84 (His84) interacts with Zn(2+). Asp86 is an active-site residue. Residue Asp115 coordinates Zn(2+). The active-site Proton acceptor is the Glu149. Zn(2+) contacts are provided by Glu150, Asp173, and His440.

The protein belongs to the peptidase M20A family. Zn(2+) serves as cofactor.

The chain is Putative dipeptidase MW1694 from Staphylococcus aureus (strain MW2).